An 89-amino-acid chain; its full sequence is Acylphosphatase (89 aa).

Residues 4–89 form the Acylphosphatase-like domain; it reads SYIAHISGRV…WQEHHFFSIG (86 aa). Residues Arg-19 and Asn-37 contribute to the active site.

The protein belongs to the acylphosphatase family.

The enzyme catalyses an acyl phosphate + H2O = a carboxylate + phosphate + H(+). The protein is Acylphosphatase (acyP) of Colwellia psychrerythraea (strain 34H / ATCC BAA-681) (Vibrio psychroerythus).